A 202-amino-acid polypeptide reads, in one-letter code: S-modulin (202 aa).

Residue Gly-2 is the site of N-myristoyl glycine attachment. EF-hand domains are found at residues 25–60 (QEELCTWYQSFLKECPSGRISKKQFESIYSKFFPDA), 61–96 (DPKAYAQHVFRSFDANNDGTLDFKEYMIALMMTSSG), 97–132 (KANQKLEWAFCLYDVDGNGTINKKEVLEIITAIFKM), and 147–182 (TPEKRTNKIWVYFGKKDDDKLTEGEFIQGIVKNKEI). Residues Asp-74, Asn-76, Asp-78, Thr-80, Glu-85, Asp-110, Asp-112, Asn-114, Thr-116, and Glu-121 each contribute to the Ca(2+) site.

Belongs to the recoverin family. The N-terminus is blocked.

Its function is as follows. Calcium-dependent regulator of light sensitivity of cGMP phosphodiesterase in rod outer segments. Controls rhodopsin phosphorylation in a Ca(2+)-dependent manner. The protein is S-modulin of Aquarana catesbeiana (American bullfrog).